We begin with the raw amino-acid sequence, 120 residues long: Immunoglobulin kappa variable 2-112 (120 aa).

Residues 1 to 20 (MRCSLQFLGVLMFWISGVSG) form the signal peptide. A framework-1 region spans residues 21–43 (DIVITQDELSNPVTSGESVSISC). A disulfide bridge connects residues C43 and C113. Positions 44–59 (RSSKSLLYKDGKTYLN) are complementarity-determining-1. The tract at residues 60-74 (WFLQRPGQSPQLLIY) is framework-2. Residues 75–81 (LMSTRAS) form a complementarity-determining-2 region. Residues 82–113 (GVSDRFSGSGSGTDFTLEISRVKAEDVGVYYC) form a framework-3 region. Residues 114 to 120 (QQLVEYP) are complementarity-determining-3.

In Mus musculus (Mouse), this protein is Immunoglobulin kappa variable 2-112.